A 105-amino-acid polypeptide reads, in one-letter code: N(4)-acetylcytidine amidohydrolase (105 aa).

In terms of domain architecture, ASCH spans 7–93; that stretch reads TFFERFEHDI…VIAEIYPGLE (87 aa). Lys-21 acts as the Proton acceptor in catalysis. Thr-24 (nucleophile) is an active-site residue. Glu-74 acts as the Proton donor in catalysis.

The protein belongs to the N(4)-acetylcytidine amidohydrolase family.

It carries out the reaction N(4)-acetylcytidine + H2O = cytidine + acetate + H(+). The enzyme catalyses N(4)-acetyl-2'-deoxycytidine + H2O = 2'-deoxycytidine + acetate + H(+). The catalysed reaction is N(4)-acetylcytosine + H2O = cytosine + acetate + H(+). In terms of biological role, catalyzes the hydrolysis of N(4)-acetylcytidine (ac4C). This chain is N(4)-acetylcytidine amidohydrolase, found in Shewanella baltica (strain OS185).